The following is a 407-amino-acid chain: Putative colanic acid biosynthesis glycosyl transferase WcaI (407 aa).

It participates in slime biogenesis; slime polysaccharide biosynthesis. The polypeptide is Putative colanic acid biosynthesis glycosyl transferase WcaI (wcaI) (Escherichia coli (strain K12)).